The following is a 504-amino-acid chain: Probable ergothioneine transporter EgtUBC (504 aa).

An ABC transmembrane type-1 domain is found at 19–198; it reads LVQHIQISFV…LLAILFDFLL (180 aa). A run of 6 helical transmembrane segments spans residues 25–44, 57–74, 81–97, 146–170, 179–198, and 210–229; these read ISFV…GIYL, VAAI…GLLI, IVPA…LPIL, MVLI…LILL, LILL…DFLL, and IITI…VPYF. Positions 231-504 are ergothioneine binding domain; that stretch reads SDKKEITIAG…DYLKDQGIIK (274 aa).

It in the N-terminal section; belongs to the binding-protein-dependent transport system permease family. This sequence in the C-terminal section; belongs to the OsmX family. In terms of assembly, the complex is probably composed of at least an ATP-binding protein (EgtUA) and a transmembrane protein (EgtUBC).

The protein localises to the membrane. Part of an ABC transporter complex EgtU required for the uptake of ergothioneine (EGT), a natural low-molecular weight (LMW) thiol antioxidant. Responsible for the translocation of the substrate across the membrane. Also contains a C-terminal periplasmic solute-binding domain (SBD) which binds to EGT with sub-micromolar affinity. Does not bind glycine betaine, carnitine, choline, proline, or cholate. Plays a role in bile acid tolerance. Dispensable for choline uptake. Probably not involved in betaine, carnitine or choline mediated osmo- or chill tolerance. Plays a role in enhancing virulence in mice. This Listeria monocytogenes serovar 1/2a (strain ATCC BAA-679 / EGD-e) protein is Probable ergothioneine transporter EgtUBC.